A 419-amino-acid polypeptide reads, in one-letter code: Serine hydroxymethyltransferase (419 aa).

Residues leucine 121 and glycine 125–leucine 127 each bind (6S)-5,6,7,8-tetrahydrofolate. Lysine 230 is modified (N6-(pyridoxal phosphate)lysine). Serine 354–phenylalanine 356 provides a ligand contact to (6S)-5,6,7,8-tetrahydrofolate.

Belongs to the SHMT family. As to quaternary structure, homodimer. Pyridoxal 5'-phosphate serves as cofactor.

Its subcellular location is the cytoplasm. It carries out the reaction (6R)-5,10-methylene-5,6,7,8-tetrahydrofolate + glycine + H2O = (6S)-5,6,7,8-tetrahydrofolate + L-serine. The protein operates within one-carbon metabolism; tetrahydrofolate interconversion. It functions in the pathway amino-acid biosynthesis; glycine biosynthesis; glycine from L-serine: step 1/1. Functionally, catalyzes the reversible interconversion of serine and glycine with tetrahydrofolate (THF) serving as the one-carbon carrier. This reaction serves as the major source of one-carbon groups required for the biosynthesis of purines, thymidylate, methionine, and other important biomolecules. Also exhibits THF-independent aldolase activity toward beta-hydroxyamino acids, producing glycine and aldehydes, via a retro-aldol mechanism. This chain is Serine hydroxymethyltransferase, found in Prochlorococcus marinus (strain SARG / CCMP1375 / SS120).